The sequence spans 396 residues: Tryptophan synthase beta chain (396 aa).

K86 is subject to N6-(pyridoxal phosphate)lysine.

The protein belongs to the TrpB family. Tetramer of two alpha and two beta chains. Pyridoxal 5'-phosphate serves as cofactor.

It catalyses the reaction (1S,2R)-1-C-(indol-3-yl)glycerol 3-phosphate + L-serine = D-glyceraldehyde 3-phosphate + L-tryptophan + H2O. Its pathway is amino-acid biosynthesis; L-tryptophan biosynthesis; L-tryptophan from chorismate: step 5/5. Functionally, the beta subunit is responsible for the synthesis of L-tryptophan from indole and L-serine. The sequence is that of Tryptophan synthase beta chain from Photobacterium profundum (strain SS9).